A 267-amino-acid chain; its full sequence is Eukaryotic translation initiation factor 3 subunit J (267 aa).

Disordered stretches follow at residues 1–118 (MAPS…DLKH) and 221–241 (MREE…KTKV). Over residues 28–46 (DEEEEDVLDSWDAAEDSEV) the composition is skewed to acidic residues. Residues 44-99 (SEVEREKAAKAAAAAAKAEAEAAAKKKSKAQRIEERKQERKKLAEANESDEDSEED) are a coiled coil. Over residues 74–88 (QRIEERKQERKKLAE) the composition is skewed to basic and acidic residues. Positions 90-100 (NESDEDSEEDE) are enriched in acidic residues. Basic and acidic residues-rich tracts occupy residues 108 to 118 (RRTEKEGDLKH) and 221 to 231 (MREERAADKGN).

The protein belongs to the eIF-3 subunit J family. As to quaternary structure, component of the eukaryotic translation initiation factor 3 (eIF-3) complex.

The protein localises to the cytoplasm. In terms of biological role, component of the eukaryotic translation initiation factor 3 (eIF-3) complex, which is involved in protein synthesis of a specialized repertoire of mRNAs and, together with other initiation factors, stimulates binding of mRNA and methionyl-tRNAi to the 40S ribosome. The eIF-3 complex specifically targets and initiates translation of a subset of mRNAs involved in cell proliferation. This is Eukaryotic translation initiation factor 3 subunit J (hcr1) from Aspergillus fumigatus (strain CBS 144.89 / FGSC A1163 / CEA10) (Neosartorya fumigata).